A 749-amino-acid chain; its full sequence is Amyloid-beta A4 precursor protein-binding family A member 2 (749 aa).

Disordered regions lie at residues 1–94, 130–220, and 238–344; these read MAHR…PEEE, DTDE…GDLE, and SMTS…NIPE. Residue Ser-11 is modified to Phosphoserine. Positions 70 to 80 are enriched in polar residues; it reads GDSSSDYVNNT. 2 stretches are compositionally biased toward acidic residues: residues 81–94 and 131–142; these read SEEE…PEEE and TDECQEAVEEWT. The STXBP1-binding stretch occupies residues 185 to 270; it reads HYCASKEGYQ…SVEACPPIKA (86 aa). Ser-208 carries the phosphoserine modification. A compositionally biased stretch (polar residues) spans 238 to 247; that stretch reads SMTSITSASE. A compositionally biased stretch (basic and acidic residues) spans 305–315; the sequence is RTPEERLKWPH. One can recognise a PID domain in the interval 368–555; sequence DGIIFAANYL…IINTQEMYND (188 aa). PDZ domains lie at 568–654 and 659–734; these read ELQL…IVSC and TVLI…TMPA.

Part of a multimeric complex containing STXBP1 and syntaxin-1. Binds to the cytoplasmic domain of amyloid-beta protein, and to the nuclear factor NF-kappa-B/p65 via its PDZ domain. Interacts with the N-terminal domain of NECAB3. In terms of tissue distribution, brain.

Its function is as follows. Putative function in synaptic vesicle exocytosis by binding to STXBP1, an essential component of the synaptic vesicle exocytotic machinery. May modulate processing of the amyloid-beta precursor protein (APP) and hence formation of APP-beta. The sequence is that of Amyloid-beta A4 precursor protein-binding family A member 2 (APBA2) from Homo sapiens (Human).